The sequence spans 79 residues: Conotoxin ArMSGL-0124 (79 aa).

An N-terminal signal peptide occupies residues 1 to 20 (MSRLGIMVLTLLLLVYMATS). Residues 21-44 (HQDAGEKQATQRDAINFRWKRSLT) constitute a propeptide that is removed on maturation. Disulfide bonds link Cys-52–Cys-64, Cys-56–Cys-73, and Cys-63–Cys-77. Residue Leu-78 is modified to Leucine amide.

Belongs to the conotoxin O3 superfamily. In terms of tissue distribution, expressed by the venom duct.

Its subcellular location is the secreted. This Conus arenatus (Sand-dusted cone) protein is Conotoxin ArMSGL-0124.